The primary structure comprises 262 residues: Cyclin-dependent kinase inhibitor 1 (262 aa).

The tract at residues 140 to 212 (SDVAEAGSEH…SAQQATRPKI (73 aa)) is disordered. The span at 160–169 (SGRDRERRET) shows a compositional bias: basic and acidic residues. Low complexity predominate over residues 198–208 (SAATASAQQAT).

It belongs to the CDI family. ICK/KRP subfamily. Expressed in roots, stems, leaves and apex.

Regulates the production of endosperm cells, affecting seed filling and embryo development. Regulates endoreduplication of endosperm cells. May play a role in the exit from the mitotic cell cycle during rice grain formation. Inhibitis leaf elongation rates by decreasing cell number, that is partly compensated by increased cell size. May not affect growth rate or cell size of the primary root. This Oryza sativa subsp. japonica (Rice) protein is Cyclin-dependent kinase inhibitor 1 (KRP1).